The sequence spans 461 residues: Photosystem II CP43 reaction center protein (461 aa).

A propeptide spanning residues 1–2 (ME) is cleaved from the precursor. N-acetylthreonine is present on Thr3. Thr3 is subject to Phosphothreonine. 5 helical membrane-spanning segments follow: residues 57-81 (LFEVAHFVPEKPMYEQGLILLPHLA), 122-143 (LIGPETLEESFPFFGYVWKDKN), 166-188 (KAMYFGGVYDTWAPGGGDVRVIT), 243-263 (KPFAWARRALVWSGEAYLSYS), and 279-300 (WFNNTAYPSEFYGPTGPEASQA). Glu355 provides a ligand contact to [CaMn4O5] cluster. A helical membrane pass occupies residues 435-459 (RARAAAAGFEKGIERETEPALSMKP).

This sequence belongs to the PsbB/PsbC family. PsbC subfamily. In terms of assembly, PSII is composed of 1 copy each of membrane proteins PsbA, PsbB, PsbC, PsbD, PsbE, PsbF, PsbH, PsbI, PsbJ, PsbK, PsbL, PsbM, PsbT, PsbX, PsbY, PsbZ, Psb30/Ycf12, at least 3 peripheral proteins of the oxygen-evolving complex and a large number of cofactors. It forms dimeric complexes. The cofactor is Binds multiple chlorophylls and provides some of the ligands for the Ca-4Mn-5O cluster of the oxygen-evolving complex. It may also provide a ligand for a Cl- that is required for oxygen evolution. PSII binds additional chlorophylls, carotenoids and specific lipids..

The protein localises to the plastid. It is found in the chloroplast thylakoid membrane. In terms of biological role, one of the components of the core complex of photosystem II (PSII). It binds chlorophyll and helps catalyze the primary light-induced photochemical processes of PSII. PSII is a light-driven water:plastoquinone oxidoreductase, using light energy to abstract electrons from H(2)O, generating O(2) and a proton gradient subsequently used for ATP formation. This chain is Photosystem II CP43 reaction center protein, found in Chlorokybus atmophyticus (Soil alga).